A 354-amino-acid chain; its full sequence is tRNA dimethylallyltransferase (354 aa).

28-35 (GPTATGKS) is a binding site for ATP. 30 to 35 (TATGKS) lines the substrate pocket. Residues 53–56 (DSRQ) form an interaction with substrate tRNA region.

This sequence belongs to the IPP transferase family. As to quaternary structure, monomer. Mg(2+) is required as a cofactor.

The catalysed reaction is adenosine(37) in tRNA + dimethylallyl diphosphate = N(6)-dimethylallyladenosine(37) in tRNA + diphosphate. Catalyzes the transfer of a dimethylallyl group onto the adenine at position 37 in tRNAs that read codons beginning with uridine, leading to the formation of N6-(dimethylallyl)adenosine (i(6)A). The chain is tRNA dimethylallyltransferase from Synechococcus sp. (strain JA-2-3B'a(2-13)) (Cyanobacteria bacterium Yellowstone B-Prime).